Reading from the N-terminus, the 106-residue chain is ATP-dependent Clp protease adapter protein ClpS (106 aa).

This sequence belongs to the ClpS family. Binds to the N-terminal domain of the chaperone ClpA.

Involved in the modulation of the specificity of the ClpAP-mediated ATP-dependent protein degradation. The sequence is that of ATP-dependent Clp protease adapter protein ClpS from Vibrio atlanticus (strain LGP32) (Vibrio splendidus (strain Mel32)).